A 424-amino-acid chain; its full sequence is CinA-like protein (424 aa).

This sequence belongs to the CinA family.

This chain is CinA-like protein, found in Shewanella halifaxensis (strain HAW-EB4).